The chain runs to 355 residues: Capsid protein VP1/VP2 (355 aa).

Basic and acidic residues predominate over residues 1–21; that stretch reads MADSTTMEHDGRGTKRKREAD. Residues 1–41 are disordered; sequence MADSTTMEHDGRGTKRKREADGGSGQGVGKGNSNAVKEGYG.

The protein belongs to the parvoviridae capsid protein family.

It is found in the virion. In terms of biological role, capsid protein self-assembles to form an icosahedral capsid with a T=1 symmetry, about 22 nm in diameter, and consisting of 60 copies of size variants of the capsid proteins, which differ in the N-terminushe capsid encapsulates the genomic ssDNA. Capsid proteins are responsible for the attachment to host cell receptors. This attachment induces virion internalization predominantly through clathrin-dependent endocytosis. This Aedes albopictus densovirus (isolate Boublik/1994) (AalDNV) protein is Capsid protein VP1/VP2 (VP).